Consider the following 134-residue polypeptide: Glycine cleavage system H protein (134 aa).

A Lipoyl-binding domain is found at 24–106 (TVRVGITDYA…YGAGWLLDIQ (83 aa)). The residue at position 65 (lysine 65) is an N6-lipoyllysine.

Belongs to the GcvH family. As to quaternary structure, the glycine cleavage system is composed of four proteins: P, T, L and H. (R)-lipoate is required as a cofactor.

Its function is as follows. The glycine cleavage system catalyzes the degradation of glycine. The H protein shuttles the methylamine group of glycine from the P protein to the T protein. In Mycobacterium tuberculosis (strain ATCC 25177 / H37Ra), this protein is Glycine cleavage system H protein.